The following is a 591-amino-acid chain: Formate--tetrahydrofolate ligase (591 aa).

74–81 (TPLGEGKS) provides a ligand contact to ATP.

The protein belongs to the formate--tetrahydrofolate ligase family.

The enzyme catalyses (6S)-5,6,7,8-tetrahydrofolate + formate + ATP = (6R)-10-formyltetrahydrofolate + ADP + phosphate. It functions in the pathway one-carbon metabolism; tetrahydrofolate interconversion. This Desulforapulum autotrophicum (strain ATCC 43914 / DSM 3382 / VKM B-1955 / HRM2) (Desulfobacterium autotrophicum) protein is Formate--tetrahydrofolate ligase.